Reading from the N-terminus, the 272-residue chain is Phosphoribosylformylglycinamidine synthase subunit PurQ (272 aa).

The region spanning 8-243 (VLVMSGYGIN…SEPEYQLKKE (236 aa)) is the Glutamine amidotransferase type-1 domain. C98 serves as the catalytic Nucleophile. Residues H225, E227, and E235 contribute to the active site.

As to quaternary structure, part of the FGAM synthase complex composed of 1 PurL, 1 PurQ and 2 PurS subunits.

The protein resides in the cytoplasm. The enzyme catalyses N(2)-formyl-N(1)-(5-phospho-beta-D-ribosyl)glycinamide + L-glutamine + ATP + H2O = 2-formamido-N(1)-(5-O-phospho-beta-D-ribosyl)acetamidine + L-glutamate + ADP + phosphate + H(+). The catalysed reaction is L-glutamine + H2O = L-glutamate + NH4(+). It functions in the pathway purine metabolism; IMP biosynthesis via de novo pathway; 5-amino-1-(5-phospho-D-ribosyl)imidazole from N(2)-formyl-N(1)-(5-phospho-D-ribosyl)glycinamide: step 1/2. In terms of biological role, part of the phosphoribosylformylglycinamidine synthase complex involved in the purines biosynthetic pathway. Catalyzes the ATP-dependent conversion of formylglycinamide ribonucleotide (FGAR) and glutamine to yield formylglycinamidine ribonucleotide (FGAM) and glutamate. The FGAM synthase complex is composed of three subunits. PurQ produces an ammonia molecule by converting glutamine to glutamate. PurL transfers the ammonia molecule to FGAR to form FGAM in an ATP-dependent manner. PurS interacts with PurQ and PurL and is thought to assist in the transfer of the ammonia molecule from PurQ to PurL. The polypeptide is Phosphoribosylformylglycinamidine synthase subunit PurQ (Methanococcus maripaludis (strain C7 / ATCC BAA-1331)).